The primary structure comprises 440 residues: Collagen alpha-1(XXVI) chain (440 aa).

Positions Met-1–Ala-20 are cleaved as a signal peptide. One can recognise an EMI domain in the interval Arg-52–Glu-128. 3 disulfide bridges follow: Cys-56-Cys-118, Cys-83-Cys-89, and Cys-117-Cys-126. Asn-70 carries an N-linked (GlcNAc...) asparagine glycan. An N-linked (GlcNAc...) asparagine glycan is attached at Asn-132. Disordered regions lie at residues Glu-157–Gly-362 and Leu-390–Lys-440. In terms of domain architecture, Collagen-like 1 spans Gly-199–Leu-267. 3 stretches are compositionally biased toward pro residues: residues Pro-200 to Pro-215, Val-231 to Arg-243, and Pro-252 to Ala-261. The segment covering Asn-269–Pro-281 has biased composition (polar residues). Residues Gly-302 to Val-334 form the Collagen-like 2 domain. Over residues Pro-306–Ala-327 the composition is skewed to pro residues. Residues Ser-347–Ser-356 show a composition bias toward basic and acidic residues.

Homotrimer or heterotrimer. In terms of processing, hydroxylated on proline residues. Post-translationally, N-glycosylated. In terms of tissue distribution, specifically expressed in the testis and ovary in adult tissues.

It is found in the secreted. It localises to the extracellular space. The protein localises to the extracellular matrix. This Mus musculus (Mouse) protein is Collagen alpha-1(XXVI) chain (Col26a1).